The primary structure comprises 411 residues: 2,3-bisphosphoglycerate-independent phosphoglycerate mutase (411 aa).

It belongs to the BPG-independent phosphoglycerate mutase family. A-PGAM subfamily.

It catalyses the reaction (2R)-2-phosphoglycerate = (2R)-3-phosphoglycerate. It participates in carbohydrate degradation; glycolysis; pyruvate from D-glyceraldehyde 3-phosphate: step 3/5. In terms of biological role, catalyzes the interconversion of 2-phosphoglycerate and 3-phosphoglycerate. This chain is 2,3-bisphosphoglycerate-independent phosphoglycerate mutase, found in Thermococcus gammatolerans (strain DSM 15229 / JCM 11827 / EJ3).